The following is a 360-amino-acid chain: Probable cinnamyl alcohol dehydrogenase 9 (360 aa).

Cys50 is a binding site for Zn(2+). Residue Thr52 participates in NADP(+) binding. The Zn(2+) site is built by His72, Glu73, Cys103, Cys106, Cys109, Cys117, and Cys166. NADP(+)-binding positions include Thr170, 191–196 (GLGGLG), 214–219 (SSSSTK), Thr254, Gly278, and 301–303 (SDV).

Belongs to the zinc-containing alcohol dehydrogenase family. In terms of assembly, homodimer. Zn(2+) is required as a cofactor. Expressed in the vasculature of the primary root and elongation regions. Expressed in the hypocotyl, cotyledon veins, vasculature of the first rosette leaves, and hydathodes. In stems, expressed in the vascular cambium, interfascicular cambium, developing xylem, and phloem. Expressed in the entire floral organs at late developing stage, and in the abscission, style and stigmatic regions of siliques and seed funicules.

It carries out the reaction (E)-cinnamyl alcohol + NADP(+) = (E)-cinnamaldehyde + NADPH + H(+). Its pathway is aromatic compound metabolism; phenylpropanoid biosynthesis. In terms of biological role, involved in lignin biosynthesis. May catalyze the final step specific for the production of lignin monomers, like coniferyl alcohol, sinapyl alcohol and 4-coumaryl alcohol. This chain is Probable cinnamyl alcohol dehydrogenase 9 (CAD9), found in Arabidopsis thaliana (Mouse-ear cress).